The primary structure comprises 458 residues: MVTLSDRFVGSDLKTSGYPWWAGNARLINLSGKLLGAHVAHAGLIVFWAGAMTLFEVAHFTPEKPLYEQGDILLPHLASLGWGVGPGGEITDITPYFIVGVLHLISSAVLGLGGVYHTLRGPETLEQYSDFFSQDWKDKNQMTNILGFHLIVLGIGASLFVFKAMFFGGLYDPWVPGGGGVRVITNPTLSPSVLFGYLFRSPFGGEGWLIGVNNMEDVVGGHIWVALHCFIGGAWHLITRPFNWARRSLVWSGEAYLSYSLGALSLMGFIASMFVWFNNTVYPSEFYGPTGSEASQAQSFTFLIRDQRLGANIASAQGPTGLGKYLMRSPTGEVIFGGETMRFWDFRGPWLEPLRGPNGLDLDKLNNDVQPWQIRRAAEYMTHAPLASINSVGGVITEPNSVNYVNLRQWLAGSHFILGFFFLIGHLWHAGRARAAAAGFEKGIDRKTEPVLSMSDLD.

The next 5 helical transmembrane spans lie at Leu54–Ala78, Leu119–Asn140, Lys163–Thr185, Arg240–Ser260, and Trp276–Ala297. Residue Glu352 participates in [CaMn4O5] cluster binding. Residues Arg432–Asp456 traverse the membrane as a helical segment.

The protein belongs to the PsbB/PsbC family. PsbC subfamily. As to quaternary structure, PSII is composed of 1 copy each of membrane proteins PsbA, PsbB, PsbC, PsbD, PsbE, PsbF, PsbH, PsbI, PsbJ, PsbK, PsbL, PsbM, PsbT, PsbX, PsbY, PsbZ, Psb30/Ycf12, peripheral proteins PsbO, CyanoQ (PsbQ), PsbU, PsbV and a large number of cofactors. It forms dimeric complexes. Binds multiple chlorophylls and provides some of the ligands for the Ca-4Mn-5O cluster of the oxygen-evolving complex. It may also provide a ligand for a Cl- that is required for oxygen evolution. PSII binds additional chlorophylls, carotenoids and specific lipids. serves as cofactor.

The protein localises to the cellular thylakoid membrane. In terms of biological role, one of the components of the core complex of photosystem II (PSII). It binds chlorophyll and helps catalyze the primary light-induced photochemical processes of PSII. PSII is a light-driven water:plastoquinone oxidoreductase, using light energy to abstract electrons from H(2)O, generating O(2) and a proton gradient subsequently used for ATP formation. This Prochlorothrix hollandica protein is Photosystem II CP43 reaction center protein.